The sequence spans 100 residues: Small ribosomal subunit protein uS14 (100 aa).

The protein belongs to the universal ribosomal protein uS14 family. As to quaternary structure, part of the 30S ribosomal subunit. Contacts proteins S3 and S10.

In terms of biological role, binds 16S rRNA, required for the assembly of 30S particles and may also be responsible for determining the conformation of the 16S rRNA at the A site. In Synechococcus sp. (strain CC9902), this protein is Small ribosomal subunit protein uS14.